The following is a 274-amino-acid chain: NH(3)-dependent NAD(+) synthetase (274 aa).

Residue 46–53 participates in ATP binding; it reads GISGGQDS. Aspartate 52 contacts Mg(2+). Position 140 (arginine 140) interacts with deamido-NAD(+). Position 160 (threonine 160) interacts with ATP. Glutamate 165 is a binding site for Mg(2+). Deamido-NAD(+) contacts are provided by lysine 173 and aspartate 180. 2 residues coordinate ATP: lysine 189 and threonine 211. 260-261 is a binding site for deamido-NAD(+); that stretch reads HK.

Belongs to the NAD synthetase family. Homodimer.

The catalysed reaction is deamido-NAD(+) + NH4(+) + ATP = AMP + diphosphate + NAD(+) + H(+). It functions in the pathway cofactor biosynthesis; NAD(+) biosynthesis; NAD(+) from deamido-NAD(+) (ammonia route): step 1/1. In terms of biological role, catalyzes the ATP-dependent amidation of deamido-NAD to form NAD. Uses ammonia as a nitrogen source. In Listeria welshimeri serovar 6b (strain ATCC 35897 / DSM 20650 / CCUG 15529 / CIP 8149 / NCTC 11857 / SLCC 5334 / V8), this protein is NH(3)-dependent NAD(+) synthetase.